The following is an 800-amino-acid chain: Phosphoinositide 3-kinase adapter protein 1 (800 aa).

One can recognise a TIR domain in the interval 8–145 (GGYDVLILYA…AVKKAISEDS (138 aa)). A necessary and sufficient to mediate inhibition of NF-kappa-B downstream of activated TLRs region spans residues 10–144 (YDVLILYASD…EAVKKAISED (135 aa)). Residues 185–321 (VQPDHIRCGV…NIPASGLHLF (137 aa)) form the DBB domain. A Phosphotyrosine modification is found at Y266. Y423, Y448, and Y463 each carry phosphotyrosine; by SYK. The segment at 527-548 (EMASRPPVPVPRPESSSPQPDN) is disordered. Residues 643–663 (QQENLKRLRDSITRRQMEKQK) are a coiled coil. The span at 702 to 713 (PKKELKRGDWKT) shows a compositional bias: basic and acidic residues. A disordered region spans residues 702-800 (PKKELKRGDW…YPPPVPPRGR (99 aa)). Low complexity predominate over residues 714–737 (ESTSSTTSSASNRSSTRSILSVSS). Polar residues predominate over residues 749-759 (SEASRSRSPIP). Pro residues-rich tracts occupy residues 767–777 (LPLPERPPRVP) and 791–800 (YPPPVPPRGR).

In terms of assembly, homooligomer. Interacts (phosphorylated on tyrosine residues within YXXM motifs) with PIK3R1 (via SH2 domain); required for BCR- and TLR-mediated activation of phosphoinositide 3-kinase. In terms of processing, constitutively phosphorylated. Phosphorylated on tyrosine residues within the YXXM motifs by BTK and SYK. Isoform 1 and isoform 2 are phosphorylated on tyrosine residues, most likely within the YXXM motifs, via CD19 activation.

The protein resides in the cytoplasm. It localises to the cell membrane. Functionally, signaling adapter that contributes to B-cell development by linking B-cell receptor (BCR) signaling to the phosphoinositide 3-kinase (PI3K)-Akt signaling pathway. Has a complementary role to the BCR coreceptor CD19, coupling BCR and PI3K activation by providing a docking site for the PI3K subunit PIK3R1. Alternatively, links Toll-like receptor (TLR) signaling to PI3K activation, a process preventing excessive inflammatory cytokine production. Also involved in the activation of PI3K in natural killer cells. May be involved in the survival of mature B-cells via activation of REL. The polypeptide is Phosphoinositide 3-kinase adapter protein 1 (PIK3AP1) (Gallus gallus (Chicken)).